Consider the following 305-residue polypeptide: Tetraacyldisaccharide 4'-kinase (305 aa).

39–46 (SVGGNGKT) lines the ATP pocket.

The protein belongs to the LpxK family.

The enzyme catalyses a lipid A disaccharide + ATP = a lipid IVA + ADP + H(+). Its pathway is glycolipid biosynthesis; lipid IV(A) biosynthesis; lipid IV(A) from (3R)-3-hydroxytetradecanoyl-[acyl-carrier-protein] and UDP-N-acetyl-alpha-D-glucosamine: step 6/6. In terms of biological role, transfers the gamma-phosphate of ATP to the 4'-position of a tetraacyldisaccharide 1-phosphate intermediate (termed DS-1-P) to form tetraacyldisaccharide 1,4'-bis-phosphate (lipid IVA). In Pseudoalteromonas atlantica (strain T6c / ATCC BAA-1087), this protein is Tetraacyldisaccharide 4'-kinase.